The following is a 241-amino-acid chain: NH(3)-dependent NAD(+) synthetase (241 aa).

27–34 serves as a coordination point for ATP; the sequence is GISGGIDS. Asp33 is a Mg(2+) binding site. Position 109 (Arg109) interacts with deamido-NAD(+). Thr129 is a binding site for ATP. Residue Glu134 coordinates Mg(2+). Lys142 and Asp149 together coordinate deamido-NAD(+). Positions 158 and 180 each coordinate ATP. 231-232 contributes to the deamido-NAD(+) binding site; the sequence is HK.

Belongs to the NAD synthetase family. As to quaternary structure, homodimer.

It carries out the reaction deamido-NAD(+) + NH4(+) + ATP = AMP + diphosphate + NAD(+) + H(+). The protein operates within cofactor biosynthesis; NAD(+) biosynthesis; NAD(+) from deamido-NAD(+) (ammonia route): step 1/1. In terms of biological role, catalyzes the ATP-dependent amidation of deamido-NAD to form NAD. Uses ammonia as a nitrogen source. The chain is NH(3)-dependent NAD(+) synthetase from Thermoplasma acidophilum (strain ATCC 25905 / DSM 1728 / JCM 9062 / NBRC 15155 / AMRC-C165).